A 102-amino-acid chain; its full sequence is Spexin prohormone 1 (102 aa).

A signal peptide spans 1 to 26 (MKDLRTLAAYALALLLLATFVSHSWS). Residues 27 to 35 (APKGSFQRR) constitute a propeptide that is removed on maturation. The residue at position 49 (glutamine 49) is a Glutamine amide. A propeptide spanning residues 50-102 (GRRFVSEDRNEGDLYDTIRLESRSQNTENLSISKAAAFLLNILQQARDEDEPY) is cleaved from the precursor.

The protein belongs to the spexin family. As to expression, mainly expressed in the brain and ovary. Detected bilaterally in the adult brainstem. Expressed in neurons in the dorsal habenula (dHb). In the dHb some neurons project into the interpeduncular nucleus (IPN) where expression often overlaps with galr2a and galr2b. Weakly expressed in the liver, intestine, kidney, heart and gill.

The protein localises to the secreted. It localises to the extracellular space. It is found in the cytoplasmic vesicle. The protein resides in the secretory vesicle. Plays a role in the regulation of food intake and energy metabolism. May also be involved in suppressing the anxiety response by promoting the expression of serotonin-related genes such as fev, tph2 and slc6a4a. In terms of biological role, acts as a ligand for galanin receptors galr2a and galr2b. Brain administration of the peptide inhibits food consumption and elevates levels of glucose, triacylglycerol and cholesterol in the serum. Likely to control food intake by regulating appetite related genes which includes the negative regulation of the orexigenic factor agrp. By controlling food intake it may act as a satiety factor in energy metabolism. In Danio rerio (Zebrafish), this protein is Spexin prohormone 1 (spx).